The chain runs to 515 residues: Na(+)/H(+) antiporter NhaB (515 aa).

The next 11 helical transmembrane spans lie at 23–43, 45–65, 96–116, 136–156, 204–224, 245–265, 305–325, 349–369, 393–413, 449–469, and 480–500; these read LAII…NPFV, GWLL…CYPL, VVLL…LLLF, CLAS…AVVI, LMMH…VGEP, APIT…VEHF, ALIG…VGLI, FEEA…VAVI, LFYL…VGTV, ATPN…SPLI, and ALPY…FLLI.

The protein belongs to the NhaB Na(+)/H(+) (TC 2.A.34) antiporter family.

Its subcellular location is the cell inner membrane. It carries out the reaction 2 Na(+)(in) + 3 H(+)(out) = 2 Na(+)(out) + 3 H(+)(in). Functionally, na(+)/H(+) antiporter that extrudes sodium in exchange for external protons. This chain is Na(+)/H(+) antiporter NhaB, found in Photorhabdus laumondii subsp. laumondii (strain DSM 15139 / CIP 105565 / TT01) (Photorhabdus luminescens subsp. laumondii).